Reading from the N-terminus, the 177-residue chain is Peptidyl-tRNA hydrolase 1 (177 aa).

Residue Tyr18 participates in tRNA binding. The active-site Proton acceptor is the His23. TRNA-binding residues include Phe65, Asn67, and Asn113.

The protein belongs to the PTH family. As to quaternary structure, monomer.

The protein resides in the cytoplasm. The catalysed reaction is an N-acyl-L-alpha-aminoacyl-tRNA + H2O = an N-acyl-L-amino acid + a tRNA + H(+). Hydrolyzes ribosome-free peptidyl-tRNAs (with 1 or more amino acids incorporated), which drop off the ribosome during protein synthesis, or as a result of ribosome stalling. Functionally, catalyzes the release of premature peptidyl moieties from peptidyl-tRNA molecules trapped in stalled 50S ribosomal subunits, and thus maintains levels of free tRNAs and 50S ribosomes. This is Peptidyl-tRNA hydrolase 1 from Corynebacterium glutamicum (strain ATCC 13032 / DSM 20300 / JCM 1318 / BCRC 11384 / CCUG 27702 / LMG 3730 / NBRC 12168 / NCIMB 10025 / NRRL B-2784 / 534).